We begin with the raw amino-acid sequence, 738 residues long: Melanotransferrin (738 aa).

Residues 1-19 (MRLLSVTFWLLLSLRTVVC) form the signal peptide. 2 consecutive Transferrin-like domains span residues 23–357 (VQWC…GLLC) and 366–706 (LRWC…GMLS). 2 disulfide bridges follow: cysteine 26–cysteine 63 and cysteine 36–cysteine 54. Residues aspartate 78 and tyrosine 107 each contribute to the Fe(3+) site. N-linked (GlcNAc...) asparagine glycosylation is present at asparagine 118. 4 disulfide bridges follow: cysteine 130–cysteine 216, cysteine 172–cysteine 189, cysteine 186–cysteine 199, and cysteine 257–cysteine 271. Residue threonine 132 coordinates hydrogencarbonate. N-linked (GlcNAc...) asparagine glycosylation is present at asparagine 135. Hydrogencarbonate-binding residues include arginine 136, valine 138, and glycine 139. A Fe(3+)-binding site is contributed by tyrosine 210. 2 residues coordinate Fe(3+): histidine 279 and tyrosine 451. Serine 462 is subject to Phosphoserine. Asparagine 515 carries an N-linked (GlcNAc...) asparagine glycan. Residues tyrosine 556 and histidine 625 each contribute to the Fe(3+) site. The GPI-anchor amidated cysteine moiety is linked to residue cysteine 709. Positions 710 to 738 (SGAGAAVQRVPLLALLLLTLAAGLLPRVL) are cleaved as a propeptide — removed in mature form.

The protein belongs to the transferrin family.

It localises to the cell membrane. Functionally, involved in iron cellular uptake. Seems to be internalized and then recycled back to the cell membrane. Binds a single atom of iron per subunit. Could also bind zinc. In Mus musculus (Mouse), this protein is Melanotransferrin (Meltf).